The following is a 243-amino-acid chain: Probable ubiquitin-conjugating enzyme E2 33 (243 aa).

A UBC core domain is found at 5–162 (ACIKRLQKEY…FPEYVEKYSQ (158 aa)). The active-site Glycyl thioester intermediate is cysteine 87. The interval 168-197 (EEAATQQTTTSENQDFPQKDNAKVESEKSV) is disordered. Residues 184–197 (PQKDNAKVESEKSV) show a composition bias toward basic and acidic residues. A helical membrane pass occupies residues 220–240 (LPGWIVLLLVSIVGVVMALPL).

Belongs to the ubiquitin-conjugating enzyme family.

It is found in the membrane. The catalysed reaction is S-ubiquitinyl-[E1 ubiquitin-activating enzyme]-L-cysteine + [E2 ubiquitin-conjugating enzyme]-L-cysteine = [E1 ubiquitin-activating enzyme]-L-cysteine + S-ubiquitinyl-[E2 ubiquitin-conjugating enzyme]-L-cysteine.. It participates in protein modification; protein ubiquitination. In terms of biological role, accepts the ubiquitin from the E1 complex and catalyzes its covalent attachment to other proteins. This chain is Probable ubiquitin-conjugating enzyme E2 33 (UBC33), found in Arabidopsis thaliana (Mouse-ear cress).